The following is a 187-amino-acid chain: Insulin-like growth factor 2 (187 aa).

Positions 1-23 (MCAARQILLLLLAFLAYALDSAA) are cleaved as a signal peptide. The tract at residues 25 to 51 (YGTAETLCGGELVDTLQFVCGDRGFYF) is b. 3 disulfide bridges follow: cysteine 32–cysteine 71, cysteine 44–cysteine 84, and cysteine 70–cysteine 75. The segment at 52 to 64 (SRPVGRNNRRINR) is c. The interval 64 to 85 (RGIVEECCFRSCDLALLETYCA) is a. Positions 86-91 (KSVKSE) are d. A propeptide spans 92–187 (RDLSATSLAG…ASPEATGPQE (96 aa)) (e peptide). Residues 162-187 (HRPLISLPSQRPPAPRASPEATGPQE) form a disordered region.

The protein belongs to the insulin family.

The protein resides in the secreted. Functionally, the insulin-like growth factors, isolated from plasma, are structurally and functionally related to insulin but have a much higher growth-promoting activity. Acts as a ligand for integrin which is required for IGF2 signaling. This Gallus gallus (Chicken) protein is Insulin-like growth factor 2.